The chain runs to 85 residues: Anti-neuroexcitation peptide 3 (85 aa).

Positions 1–21 (MKLSLLLVISASMLIDGLVNA) are cleaved as a signal peptide. The region spanning 22–82 (DGYIRGSNGC…TWKSESNTCG (61 aa)) is the LCN-type CS-alpha/beta domain. Disulfide bonds link cysteine 31–cysteine 81, cysteine 35–cysteine 56, cysteine 42–cysteine 63, and cysteine 46–cysteine 65.

It belongs to the long (4 C-C) scorpion toxin superfamily. Sodium channel inhibitor family. Beta subfamily. Expressed by the venom gland.

It is found in the secreted. Binds to sodium channels (Nav) and inhibits them. Recombinant ANEP delays the convulsion seizure of model animals by 18% and shows anti-neuroexcitatory activity. In Olivierus martensii (Manchurian scorpion), this protein is Anti-neuroexcitation peptide 3.